The sequence spans 123 residues: uncharacterized protein (123 aa).

2 helical membrane-spanning segments follow: residues 55–77 (LLIH…STIL) and 92–114 (FFIN…TIVY).

The protein resides in the cell membrane. This is an uncharacterized protein from Pasteurella multocida (strain Pm70).